Reading from the N-terminus, the 400-residue chain is Chalcone synthase 7 (400 aa).

Residue Cys168 is part of the active site.

Belongs to the thiolase-like superfamily. Chalcone/stilbene synthases family.

The enzyme catalyses (E)-4-coumaroyl-CoA + 3 malonyl-CoA + 3 H(+) = 2',4,4',6'-tetrahydroxychalcone + 3 CO2 + 4 CoA. The protein operates within secondary metabolite biosynthesis; flavonoid biosynthesis. Functionally, the primary product of this enzyme is 4,2',4',6'-tetrahydroxychalcone (also termed naringenin-chalcone or chalcone) which can under specific conditions spontaneously isomerize into naringenin. The polypeptide is Chalcone synthase 7 (CHS7) (Sorghum bicolor (Sorghum)).